A 100-amino-acid chain; its full sequence is Small ribosomal subunit protein uS14 (100 aa).

This sequence belongs to the universal ribosomal protein uS14 family. As to quaternary structure, part of the 30S ribosomal subunit. Contacts proteins S3 and S10.

In terms of biological role, binds 16S rRNA, required for the assembly of 30S particles and may also be responsible for determining the conformation of the 16S rRNA at the A site. The chain is Small ribosomal subunit protein uS14 from Parasynechococcus marenigrum (strain WH8102).